The sequence spans 194 residues: ATP-dependent Clp protease proteolytic subunit (194 aa).

The Nucleophile role is filled by serine 98. Histidine 123 is a catalytic residue.

The protein belongs to the peptidase S14 family. As to quaternary structure, fourteen ClpP subunits assemble into 2 heptameric rings which stack back to back to give a disk-like structure with a central cavity, resembling the structure of eukaryotic proteasomes.

It localises to the cytoplasm. The catalysed reaction is Hydrolysis of proteins to small peptides in the presence of ATP and magnesium. alpha-casein is the usual test substrate. In the absence of ATP, only oligopeptides shorter than five residues are hydrolyzed (such as succinyl-Leu-Tyr-|-NHMec, and Leu-Tyr-Leu-|-Tyr-Trp, in which cleavage of the -Tyr-|-Leu- and -Tyr-|-Trp bonds also occurs).. In terms of biological role, cleaves peptides in various proteins in a process that requires ATP hydrolysis. Has a chymotrypsin-like activity. Plays a major role in the degradation of misfolded proteins. This is ATP-dependent Clp protease proteolytic subunit from Clostridium kluyveri (strain NBRC 12016).